We begin with the raw amino-acid sequence, 138 residues long: Nucleoside diphosphate kinase (138 aa).

Residues Lys10, Phe58, Arg86, Thr92, Arg103, and Asn113 each coordinate ATP. The active-site Pros-phosphohistidine intermediate is His116.

This sequence belongs to the NDK family. Homotetramer. Requires Mg(2+) as cofactor.

It localises to the cytoplasm. It carries out the reaction a 2'-deoxyribonucleoside 5'-diphosphate + ATP = a 2'-deoxyribonucleoside 5'-triphosphate + ADP. It catalyses the reaction a ribonucleoside 5'-diphosphate + ATP = a ribonucleoside 5'-triphosphate + ADP. Its function is as follows. Major role in the synthesis of nucleoside triphosphates other than ATP. The ATP gamma phosphate is transferred to the NDP beta phosphate via a ping-pong mechanism, using a phosphorylated active-site intermediate. The polypeptide is Nucleoside diphosphate kinase (Haemophilus ducreyi (strain 35000HP / ATCC 700724)).